Consider the following 75-residue polypeptide: DNA-directed RNA polymerase subunit epsilon (75 aa).

The protein belongs to the RNA polymerase subunit epsilon family. In terms of assembly, RNAP is composed of a core of 2 alpha, a beta and a beta' subunit. The core is associated with a delta subunit, and at least one of epsilon or omega. When a sigma factor is associated with the core the holoenzyme is formed, which can initiate transcription.

It carries out the reaction RNA(n) + a ribonucleoside 5'-triphosphate = RNA(n+1) + diphosphate. A non-essential component of RNA polymerase (RNAP). In Lactobacillus johnsonii (strain CNCM I-12250 / La1 / NCC 533), this protein is DNA-directed RNA polymerase subunit epsilon.